The sequence spans 621 residues: Type 2 DNA topoisomerase 6 subunit B (621 aa).

Residues asparagine 48, aspartate 80, 101 to 102 (SR), 111 to 118 (GQQGIGIS), and lysine 435 each bind ATP.

This sequence belongs to the TOP6B family. In terms of assembly, homodimer. Heterotetramer of two Top6A and two Top6B chains.

The enzyme catalyses ATP-dependent breakage, passage and rejoining of double-stranded DNA.. Functionally, relaxes both positive and negative superturns and exhibits a strong decatenase activity. In Methanosarcina acetivorans (strain ATCC 35395 / DSM 2834 / JCM 12185 / C2A), this protein is Type 2 DNA topoisomerase 6 subunit B.